Consider the following 382-residue polypeptide: Bifunctional enzyme IspD/IspF (382 aa).

Residues 1 to 225 (MTGKPSIAAL…AEERMAMISR (225 aa)) form a 2-C-methyl-D-erythritol 4-phosphate cytidylyltransferase region. Positions 225-382 (RTAMGFDVHG…AVATVRVPSI (158 aa)) are 2-C-methyl-D-erythritol 2,4-cyclodiphosphate synthase. Positions 231 and 233 each coordinate a divalent metal cation. 4-CDP-2-C-methyl-D-erythritol 2-phosphate is bound by residues 231–233 (DVH) and 257–258 (HS). Residue His265 participates in a divalent metal cation binding. Residues 279-281 (DIG), 355-358 (TTTE), Phe362, and Arg365 contribute to the 4-CDP-2-C-methyl-D-erythritol 2-phosphate site.

It in the N-terminal section; belongs to the IspD/TarI cytidylyltransferase family. IspD subfamily. The protein in the C-terminal section; belongs to the IspF family. A divalent metal cation is required as a cofactor.

It carries out the reaction 2-C-methyl-D-erythritol 4-phosphate + CTP + H(+) = 4-CDP-2-C-methyl-D-erythritol + diphosphate. The catalysed reaction is 4-CDP-2-C-methyl-D-erythritol 2-phosphate = 2-C-methyl-D-erythritol 2,4-cyclic diphosphate + CMP. It functions in the pathway isoprenoid biosynthesis; isopentenyl diphosphate biosynthesis via DXP pathway; isopentenyl diphosphate from 1-deoxy-D-xylulose 5-phosphate: step 2/6. The protein operates within isoprenoid biosynthesis; isopentenyl diphosphate biosynthesis via DXP pathway; isopentenyl diphosphate from 1-deoxy-D-xylulose 5-phosphate: step 4/6. In terms of biological role, bifunctional enzyme that catalyzes the formation of 4-diphosphocytidyl-2-C-methyl-D-erythritol from CTP and 2-C-methyl-D-erythritol 4-phosphate (MEP) (IspD), and catalyzes the conversion of 4-diphosphocytidyl-2-C-methyl-D-erythritol 2-phosphate (CDP-ME2P) to 2-C-methyl-D-erythritol 2,4-cyclodiphosphate (ME-CPP) with a corresponding release of cytidine 5-monophosphate (CMP) (IspF). The protein is Bifunctional enzyme IspD/IspF of Rhizorhabdus wittichii (strain DSM 6014 / CCUG 31198 / JCM 15750 / NBRC 105917 / EY 4224 / RW1) (Sphingomonas wittichii).